A 312-amino-acid polypeptide reads, in one-letter code: tRNA dimethylallyltransferase (312 aa).

Position 17–24 (17–24 (GPTASGKT)) interacts with ATP. 19 to 24 (TASGKT) provides a ligand contact to substrate. 3 interaction with substrate tRNA regions span residues 42-45 (DSAL), 166-170 (QRLLR), and 247-252 (RCVGYR).

The protein belongs to the IPP transferase family. As to quaternary structure, monomer. Mg(2+) is required as a cofactor.

It catalyses the reaction adenosine(37) in tRNA + dimethylallyl diphosphate = N(6)-dimethylallyladenosine(37) in tRNA + diphosphate. In terms of biological role, catalyzes the transfer of a dimethylallyl group onto the adenine at position 37 in tRNAs that read codons beginning with uridine, leading to the formation of N6-(dimethylallyl)adenosine (i(6)A). The protein is tRNA dimethylallyltransferase of Sodalis glossinidius (strain morsitans).